We begin with the raw amino-acid sequence, 1009 residues long: Protein-tyrosine kinase 2-beta (1009 aa).

The region spanning 39–359 (RILKVCFYSN…GYCRLQGEHK (321 aa)) is the FERM domain. Phosphoserine occurs at positions 361, 375, and 399. Residue Tyr-402 is modified to Phosphotyrosine; by autocatalysis. Residues 425-683 (VVLNRILGEG…ELVCSLSDIY (259 aa)) enclose the Protein kinase domain. ATP-binding positions include 431–439 (LGEGFFGEV), Lys-457, and 503–509 (ELYPYGE). The Proton acceptor role is filled by Asp-549. A phosphotyrosine mark is found at Tyr-579, Tyr-580, and Tyr-722. Residues 702–725 (PKILEPTAFQEPPPKPSRPKYKHP) are disordered. Ser-762 bears the Phosphoserine mark. At Thr-765 the chain carries Phosphothreonine. Positions 801 to 1009 (KIKMRQVLDR…VANLAHPPAE (209 aa)) are interaction with TGFB1I1. The residue at position 834 (Tyr-834) is a Phosphotyrosine. Ser-839 is subject to Phosphoserine. Thr-842 is subject to Phosphothreonine. Tyr-849 bears the Phosphotyrosine mark. Phosphoserine is present on Ser-866. A focal adhesion targeting (FAT) region spans residues 868-1009 (QPTANLDRTD…VANLAHPPAE (142 aa)). Tyr-881 is subject to Phosphotyrosine.

It belongs to the protein kinase superfamily. Tyr protein kinase family. FAK subfamily. In terms of assembly, homodimer, or homooligomer. Interacts with NPHP1, ASAP1, ASAP2, ARHGAP26, SKAP2 and TGFB1I1. The Tyr-402 phosphorylated form interacts with SRC (via SH2 domain) and SRC family members. Forms a signaling complex with EPHA1, LCK and phosphatidylinositol 3-kinase; upon activation by EFNA1. Interacts with GRB2 (via SH2 domain). Interacts with P53/TP53 and MDM2. Interacts with MYLK. Interacts with BCAR1. Interacts with RB1CC1. Interacts with RHOU. Interacts with VAV1. Interacts with PDPK1. Interacts with LPXN and PTPN12. Interacts with SIRPA and SH2D3C. Interacts (hypophosphorylated) with PXN. Interacts with ARHGAP10. Interacts with KCNA2. Phosphorylated on tyrosine residues in response to various stimuli that elevate the intracellular calcium concentration; this activation is indirect and may be mediated by production of reactive oxygen species (ROS). Tyr-402 is the major autophosphorylation site, but other kinases can also phosphorylate Tyr-402. Autophosphorylation occurs in trans, i.e. one subunit of the dimeric receptor phosphorylates tyrosine residues on the other subunit. Phosphorylation at Tyr-402 promotes interaction with SRC and SRC family members, leading to phosphorylation at Tyr-579; Tyr-580 and Tyr-881. Phosphorylation at Tyr-881 is important for interaction with GRB2. Phosphorylated on tyrosine residues upon activation of FGR and PKC. Recruitment by NPHP1 to cell matrix adhesions initiates Tyr-402 phosphorylation. In monocytes, adherence to substrata is required for tyrosine phosphorylation and kinase activation. Angiotensin II, thapsigargin and L-alpha-lysophosphatidic acid (LPA) also induce autophosphorylation and increase kinase activity. Phosphorylation by MYLK promotes ITGB2 activation and is thus essential to trigger neutrophil transmigration during lung injury. Dephosphorylated by PTPN12. As to expression, highly expressed in pulmonary vein endothelial cells, lung and brain (at protein level). Isoform 1 is expressed at high levels in the brain (hippocampus, cerebral cortex and olfactory bulb) and poorly in the spleen and other tissues, whereas isoforms 2 and 3 are expressed in the spleen and brain (highest in cerebellum).

Its subcellular location is the cytoplasm. The protein resides in the perinuclear region. It localises to the cell membrane. The protein localises to the cell projection. It is found in the lamellipodium. Its subcellular location is the cell cortex. The protein resides in the nucleus. It localises to the cell junction. The protein localises to the focal adhesion. The catalysed reaction is L-tyrosyl-[protein] + ATP = O-phospho-L-tyrosyl-[protein] + ADP + H(+). Its activity is regulated as follows. Activated in response to stimuli that lead to increased intracellular Ca(2+) levels; this activation is indirect and may be mediated by calcium-mediated production of reactive oxygen species (ROS). Activated by autophosphorylation at Tyr-402; this creates a binding site for SRC family kinases and leads to phosphorylation at additional tyrosine residues. Phosphorylation at Tyr-402, Tyr-579 and Tyr-580 is required for optimal kinase activity. In terms of biological role, non-receptor protein-tyrosine kinase that regulates reorganization of the actin cytoskeleton, cell polarization, cell migration, adhesion, spreading and bone remodeling. Plays a role in the regulation of the humoral immune response, and is required for normal levels of marginal B-cells in the spleen and normal migration of splenic B-cells. Required for normal macrophage polarization and migration towards sites of inflammation. Regulates cytoskeleton rearrangement and cell spreading in T-cells, and contributes to the regulation of T-cell responses. Promotes osteoclastic bone resorption; this requires both PTK2B/PYK2 and SRC. May inhibit differentiation and activity of osteoprogenitor cells. Functions in signaling downstream of integrin and collagen receptors, immune receptors, G-protein coupled receptors (GPCR), cytokine, chemokine and growth factor receptors, and mediates responses to cellular stress. Forms multisubunit signaling complexes with SRC and SRC family members upon activation; this leads to the phosphorylation of additional tyrosine residues, creating binding sites for scaffold proteins, effectors and substrates. Regulates numerous signaling pathways. Promotes activation of phosphatidylinositol 3-kinase and of the AKT1 signaling cascade. Promotes activation of NOS3. Regulates production of the cellular messenger cGMP. Promotes activation of the MAP kinase signaling cascade, including activation of MAPK1/ERK2, MAPK3/ERK1 and MAPK8/JNK1. Promotes activation of Rho family GTPases, such as RHOA and RAC1. Recruits the ubiquitin ligase MDM2 to P53/TP53 in the nucleus, and thereby regulates P53/TP53 activity, P53/TP53 ubiquitination and proteasomal degradation. Acts as a scaffold, binding to both PDPK1 and SRC, thereby allowing SRC to phosphorylate PDPK1 at 'Tyr-9, 'Tyr-373', and 'Tyr-376'. Promotes phosphorylation of NMDA receptors by SRC family members, and thereby contributes to the regulation of NMDA receptor ion channel activity and intracellular Ca(2+) levels. May also regulate potassium ion transport by phosphorylation of potassium channel subunits. Phosphorylates SRC; this increases SRC kinase activity. Phosphorylates ASAP1, NPHP1, KCNA2 and SHC1. Promotes phosphorylation of ASAP2, RHOU and PXN; this requires both SRC and PTK2/PYK2. This Rattus norvegicus (Rat) protein is Protein-tyrosine kinase 2-beta (Ptk2b).